The sequence spans 477 residues: Homospermidine synthase (477 aa).

The protein belongs to the saccharopine dehydrogenase family. In terms of assembly, homodimer. The cofactor is NAD(+).

It catalyses the reaction 2 putrescine = sym-homospermidine + NH4(+). It carries out the reaction putrescine + spermidine = sym-homospermidine + propane-1,3-diamine. Its function is as follows. Involved in the NAD(+)-dependent synthesis of the polyamine homospermidine from putrescine. The chain is Homospermidine synthase (hss) from Blastochloris viridis (Rhodopseudomonas viridis).